We begin with the raw amino-acid sequence, 571 residues long: Optineurin (571 aa).

Disordered regions lie at residues 1–32 and 100–144; these read MSHQPLSCLTEKGDSPSESTGNGPPHLAHPNL and LSHE…DQLR. Residues 38-170 are a coiled coil; sequence EELLQQMKEL…VSELQLKLNS (133 aa). Positions 58–209 are interaction with Rab8; it reads MKLNNQAMKG…GPTRTVSIGT (152 aa). Basic and acidic residues-rich tracts occupy residues 100-123 and 130-143; these read LSHENEKLKEELGKLKGKSERSSE and RLPRAEAEQEKDQL. The LIR signature appears at 176–181; that stretch reads DSFVEI. Ser-177 carries the post-translational modification Phosphoserine; by TBK1. Residues 186–197 show a composition bias toward basic and acidic residues; the sequence is GEAEGSVKEIKH. Disordered regions lie at residues 186–210 and 255–291; these read GEAEGSVKEIKHSPGPTRTVSIGTS and VSDFEKKASNRSEIETQTEGSTEKENEEEKGPETVGS. Ser-198 is subject to Phosphoserine. A compositionally biased stretch (polar residues) spans 201 to 210; the sequence is PTRTVSIGTS. Residues 233–502 are a coiled coil; sequence CLREGNQKVE…LLKENDAFED (270 aa). 2 stretches are compositionally biased toward basic and acidic residues: residues 255–268 and 275–286; these read VSDFEKKASNRSEI and STEKENEEEKGP. The residue at position 336 (Ser-336) is a Phosphoserine. An interaction with HD region spans residues 405-571; sequence TRKESEKVDR…LQIHVMDCII (167 aa). The segment at 406-514 is interaction with MYO6; the sequence is RKESEKVDRA…RQSLMEMQSR (109 aa). The short motif at 468-473 is the UBAN element; that stretch reads DFHAER. The residue at position 520 (Ser-520) is a Phosphoserine. The CCHC NOA-type zinc-finger motif lies at 541 to 571; that stretch reads QRNIPIHSCPKCGEVLPDIDTLQIHVMDCII. 4 residues coordinate Zn(2+): Cys-549, Cys-552, His-565, and Cys-569.

As to quaternary structure, self-associates. Interacts with HD. Interacts with GTF3A. Interacts with MYO6. Interacts (via UBAN) with ubiquitinated TFRC. Interacts with GTP-bound Rab8 (RAB8A and/or RAB8B). Interacts with TBC1D17. Interacts with TBK1. Interacts with TRAF3. Binds to linear ubiquitin chains. Interacts with LC3 family members MAP1LC3A, MAP1LC3B, GABARAP, GABARAPL1 and GABARAPL2; OPTN phosphorylation increases the association (at least with MAP1LC3B). Interacts with RAB12; the interaction may be indirect. Interacts with TBK1; this interaction leads to the Golgi localization of TBK1 and its subsequent activation. Interacts with palmitoyltransferase ZDHHC17/HIP14; the interaction does not lead to palmitoylation of OPTN. Interacts with CYLD. Interacts with TOM1; the interaction is indirect and is mediated by MYO6, which acts as a bridge between TOM1 and OPTN. Interacts with USP12; the interaction is independent of USP12 deubiquitinase activity and may be involved in regulation of autophagic flux. In terms of processing, phosphorylated by TBK1, leading to restrict bacterial proliferation in case of infection.

The protein resides in the cytoplasm. The protein localises to the perinuclear region. It localises to the golgi apparatus. Its subcellular location is the trans-Golgi network. It is found in the cytoplasmic vesicle. The protein resides in the autophagosome. The protein localises to the recycling endosome. Its function is as follows. Plays an important role in the maintenance of the Golgi complex, in membrane trafficking, in exocytosis, through its interaction with myosin VI and Rab8. Links myosin VI to the Golgi complex and plays an important role in Golgi ribbon formation. Negatively regulates the induction of IFNB in response to RNA virus infection. Plays a neuroprotective role in the eye and optic nerve. Probably part of the TNF-alpha signaling pathway that can shift the equilibrium toward induction of cell death. May act by regulating membrane trafficking and cellular morphogenesis via a complex that contains Rab8 and huntingtin (HD). Mediates the interaction of Rab8 with the probable GTPase-activating protein TBC1D17 during Rab8-mediated endocytic trafficking, such as that of transferrin receptor (TFRC/TfR); regulates Rab8 recruitment to tubules emanating from the endocytic recycling compartment. Autophagy receptor that interacts directly with both the cargo to become degraded and an autophagy modifier of the MAP1 LC3 family; targets ubiquitin-coated bacteria (xenophagy) and appears to function in the same pathway as SQSTM1 and CALCOCO2/NDP52. The chain is Optineurin (OPTN) from Macaca fascicularis (Crab-eating macaque).